Here is a 362-residue protein sequence, read N- to C-terminus: Protein RecA (362 aa).

77 to 84 (GPESSGKT) lines the ATP pocket.

This sequence belongs to the RecA family.

It is found in the cytoplasm. In terms of biological role, can catalyze the hydrolysis of ATP in the presence of single-stranded DNA, the ATP-dependent uptake of single-stranded DNA by duplex DNA, and the ATP-dependent hybridization of homologous single-stranded DNAs. It interacts with LexA causing its activation and leading to its autocatalytic cleavage. The protein is Protein RecA of Nitrobacter winogradskyi (strain ATCC 25391 / DSM 10237 / CIP 104748 / NCIMB 11846 / Nb-255).